The sequence spans 268 residues: Large ribosomal subunit protein uL4 (268 aa).

This sequence belongs to the universal ribosomal protein uL4 family. In terms of assembly, part of the 50S ribosomal subunit.

Its function is as follows. One of the primary rRNA binding proteins, this protein initially binds near the 5'-end of the 23S rRNA. It is important during the early stages of 50S assembly. It makes multiple contacts with different domains of the 23S rRNA in the assembled 50S subunit and ribosome. Forms part of the polypeptide exit tunnel. The sequence is that of Large ribosomal subunit protein uL4 from Nanoarchaeum equitans (strain Kin4-M).